Reading from the N-terminus, the 286-residue chain is Ribosomal RNA small subunit methyltransferase H (286 aa).

S-adenosyl-L-methionine contacts are provided by residues 25-27 (GGH), aspartate 45, leucine 79, aspartate 93, and glutamine 100.

The protein belongs to the methyltransferase superfamily. RsmH family.

It is found in the cytoplasm. The enzyme catalyses cytidine(1402) in 16S rRNA + S-adenosyl-L-methionine = N(4)-methylcytidine(1402) in 16S rRNA + S-adenosyl-L-homocysteine + H(+). Its function is as follows. Specifically methylates the N4 position of cytidine in position 1402 (C1402) of 16S rRNA. This chain is Ribosomal RNA small subunit methyltransferase H, found in Petrotoga mobilis (strain DSM 10674 / SJ95).